The primary structure comprises 147 residues: D-aminoacyl-tRNA deacylase (147 aa).

Residues 137 to 138 carry the Gly-cisPro motif, important for rejection of L-amino acids motif; that stretch reads GP.

This sequence belongs to the DTD family. As to quaternary structure, homodimer.

It is found in the cytoplasm. It catalyses the reaction glycyl-tRNA(Ala) + H2O = tRNA(Ala) + glycine + H(+). The enzyme catalyses a D-aminoacyl-tRNA + H2O = a tRNA + a D-alpha-amino acid + H(+). Its function is as follows. An aminoacyl-tRNA editing enzyme that deacylates mischarged D-aminoacyl-tRNAs. Also deacylates mischarged glycyl-tRNA(Ala), protecting cells against glycine mischarging by AlaRS. Acts via tRNA-based rather than protein-based catalysis; rejects L-amino acids rather than detecting D-amino acids in the active site. By recycling D-aminoacyl-tRNA to D-amino acids and free tRNA molecules, this enzyme counteracts the toxicity associated with the formation of D-aminoacyl-tRNA entities in vivo and helps enforce protein L-homochirality. This is D-aminoacyl-tRNA deacylase from Exiguobacterium sp. (strain ATCC BAA-1283 / AT1b).